The sequence spans 1078 residues: Cell wall acid trehalase ATC1 (1078 aa).

The first 54 residues, 1–54 (MAANSSFFLADNCAPHNQSFIQFCIHAASKKKGRIALMCLANLFLLFSFHLLYA), serve as a signal peptide directing secretion. Asn-4, Asn-17, Asn-150, Asn-184, Asn-242, Asn-287, Asn-301, and Asn-350 each carry an N-linked (GlcNAc...) asparagine glycan. 478–479 (WD) contributes to the substrate binding site. N-linked (GlcNAc...) asparagine glycosylation is found at Asn-532, Asn-591, and Asn-601. Glu-607 serves as the catalytic Proton donor. Residues Asn-661 and Asn-670 are each glycosylated (N-linked (GlcNAc...) asparagine). Residue 676 to 677 (KQ) coordinates substrate. Residues Asn-829, Asn-837, Asn-904, Asn-922, Asn-931, Asn-946, Asn-1003, and Asn-1037 are each glycosylated (N-linked (GlcNAc...) asparagine).

This sequence belongs to the glycosyl hydrolase 65 family.

The protein resides in the secreted. The protein localises to the cell wall. It catalyses the reaction alpha,alpha-trehalose + H2O = alpha-D-glucose + beta-D-glucose. Cell wall acid trehalase that catalyzes hydrolysis of the disaccharide trehalose and required for growth on trehalose as carbon source. Plays a role in dimorphic conversion and virulence. In Candida albicans (strain SC5314 / ATCC MYA-2876) (Yeast), this protein is Cell wall acid trehalase ATC1 (ATC1).